Here is a 935-residue protein sequence, read N- to C-terminus: Disintegrin and metalloproteinase domain-containing protein 22 (935 aa).

An N-terminal signal peptide occupies residues 1–24; sequence MHINGGPLASWICCVIGSIHLAHA. The propeptide occupies 25–227; the sequence is STRPENGGTS…QQTRSQRKKR (203 aa). Residues Asn-167 and Asn-210 are each glycosylated (N-linked (GlcNAc...) asparagine). Residues 228–736 are Extracellular-facing; the sequence is QTRRYPRNVE…NRDEGVISTN (509 aa). The 200-residue stretch at 241-440 folds into the Peptidase M12B domain; it reads KYVELMIVND…GGGACLFNKP (200 aa). 17 disulfide bridges follow: Cys-351–Cys-435, Cys-394–Cys-419, Cys-396–Cys-403, Cys-449–Cys-479, Cys-460–Cys-476, Cys-462–Cys-468, Cys-475–Cys-496, Cys-487–Cys-493, Cys-492–Cys-518, Cys-505–Cys-525, Cys-512–Cys-544, Cys-537–Cys-549, Cys-556–Cys-607, Cys-571–Cys-637, Cys-585–Cys-595, Cys-602–Cys-665, and Cys-659–Cys-670. Positions 446 to 533 constitute a Disintegrin domain; sequence PPECGNGFVE…QCPANIHKLD (88 aa). An N-linked (GlcNAc...) asparagine glycan is attached at Asn-521. 2 N-linked (GlcNAc...) asparagine glycosylation sites follow: Asn-609 and Asn-636. Residue Asn-677 is glycosylated (N-linked (GlcNAc...) asparagine). One can recognise an EGF-like domain in the interval 677-713; sequence NFSTCLGSTNKICSGHGVCSNEVRCICDRFWTGEDCS. 3 disulfide bridges follow: Cys-681–Cys-695, Cys-689–Cys-701, and Cys-703–Cys-712. The helical transmembrane segment at 737-757 threads the bilayer; that stretch reads IIIGAIAGTILVLALVLGITA. The Cytoplasmic segment spans residues 758-935; sequence WGYKNYRRER…QSARLWETSI (178 aa). Residues 850–935 are disordered; it reads VSDVCENGRP…QSARLWETSI (86 aa). Residues 859 to 870 are compositionally biased toward polar residues; that stretch reads PRSNSWQGNVTS. The span at 871–882 shows a compositional bias: basic residues; that stretch reads SRKKLRGKRFRP. Residues 891–906 show a composition bias toward low complexity; it reads SPAKSPSSSTGSIASS.

In terms of processing, the precursor is cleaved by a furin endopeptidase. In terms of tissue distribution, low levels in adult tissues. Not detected in developing embryos.

The protein localises to the cell membrane. In terms of biological role, probable ligand for integrin in the brain. This is a non catalytic metalloprotease-like protein. The polypeptide is Disintegrin and metalloproteinase domain-containing protein 22 (adam22) (Xenopus laevis (African clawed frog)).